The chain runs to 220 residues: GTP cyclohydrolase 1 (220 aa).

Zn(2+) is bound by residues cysteine 110, histidine 113, and cysteine 181.

This sequence belongs to the GTP cyclohydrolase I family. As to quaternary structure, toroid-shaped homodecamer, composed of two pentamers of five dimers.

The enzyme catalyses GTP + H2O = 7,8-dihydroneopterin 3'-triphosphate + formate + H(+). The protein operates within cofactor biosynthesis; 7,8-dihydroneopterin triphosphate biosynthesis; 7,8-dihydroneopterin triphosphate from GTP: step 1/1. This is GTP cyclohydrolase 1 from Baumannia cicadellinicola subsp. Homalodisca coagulata.